A 230-amino-acid polypeptide reads, in one-letter code: GDT1-like protein 4 (230 aa).

A run of 6 helical transmembrane segments spans residues 12–32, 39–59, 71–91, 135–155, 175–195, and 207–227; these read LAMTFVSEIGDKTFFAAAILA, LVLAGCLSALIVMTILSATLG, THHITTLLFFGFGLWSLWDGF, AFLTQFFSPIFLKAFSINFFG, FGVVLGGVVAQFLCTTAAVIG, and IVALSGGMLFIIFGIQSYLTS.

This sequence belongs to the GDT1 family.

It localises to the membrane. In Arabidopsis thaliana (Mouse-ear cress), this protein is GDT1-like protein 4.